The chain runs to 429 residues: MKSKVKMFFAAAIVWSACSSTGYAAAIEKEKHVSELRAEDLFVKKVEGMNKDFIKGADVSSVIALENSGVTFYNTNGKRQDIFTTLKQAGVNYVRVRIWNHPYDSNGNGYGGGNNDVQKAIEIGKRATANGMKVLADFHYSDFWADPAKQKVPKAWANLSFEAKKAKLYEYTKQSLQKMIKEGVDIGMVQVGNETTGGFAGETDWTKMCQLFNEGSRAVRETNSNILVALHFTNPETAGRYSFIAETLSKNKVDYDVFASSYYPFWHGTLQNLTSVLKAVANTYGKKVMVAETSYTYTAEDGDGHGNTAPKSGQTLPYPISVQGQATAVRDVMEAVANTGKAGLGVFYWEPAWIPVGPKTQIEKNKVLWETYGSGWASSYAAEYDPEDAGKWYGGSAVDNQALFDFNGHPLPSLQVFQYAESGHIPKKR.

The signal sequence occupies residues 1-21; the sequence is MKSKVKMFFAAAIVWSACSST. 146–149 provides a ligand contact to substrate; the sequence is DPAK. Glutamate 194 acts as the Proton donor in catalysis. Substrate is bound by residues 233–234 and histidine 267; that span reads TN. The Nucleophile role is filled by glutamate 292. Threonine 296 contributes to the substrate binding site. Ca(2+) contacts are provided by aspartate 301, aspartate 303, histidine 305, and asparagine 307. Substrate contacts are provided by lysine 311 and aspartate 388. Residues serine 396 and aspartate 399 each contribute to the Ca(2+) site.

Belongs to the glycosyl hydrolase 53 family. Ca(2+) is required as a cofactor.

Its subcellular location is the secreted. It catalyses the reaction The enzyme specifically hydrolyzes (1-&gt;4)-beta-D-galactosidic linkages in type I arabinogalactans.. Functionally, involved in galactan degradation. Degrades arabinose-free galactan to galactooligosaccharides, producing galactotetraose as the main product along with galactotriose, galactobiose, and galactose. Is also able to degrade galactotetraose, galactotriose and galactobiose, suggesting an additional exo-mode of activity. May hydrolyze the beta-1,4-galactan linkages of the galactan portion of arabinogalactan type I, a pectic plant polysaccharide from which most of the arabinose has been removed. The polypeptide is Endo-beta-1,4-galactanase (Bacillus subtilis (strain 168)).